Here is a 583-residue protein sequence, read N- to C-terminus: Isocitrate dehydrogenase kinase/phosphatase (583 aa).

ATP is bound by residues 315–321 and Lys-336; that span reads APGIRGM. Residue Asp-371 is part of the active site.

It belongs to the AceK family.

The protein resides in the cytoplasm. The enzyme catalyses L-seryl-[isocitrate dehydrogenase] + ATP = O-phospho-L-seryl-[isocitrate dehydrogenase] + ADP + H(+). Bifunctional enzyme which can phosphorylate or dephosphorylate isocitrate dehydrogenase (IDH) on a specific serine residue. This is a regulatory mechanism which enables bacteria to bypass the Krebs cycle via the glyoxylate shunt in response to the source of carbon. When bacteria are grown on glucose, IDH is fully active and unphosphorylated, but when grown on acetate or ethanol, the activity of IDH declines drastically concomitant with its phosphorylation. In Salmonella paratyphi C (strain RKS4594), this protein is Isocitrate dehydrogenase kinase/phosphatase.